We begin with the raw amino-acid sequence, 809 residues long: Trimethylamine-N-oxide reductase 2 (809 aa).

The tat-type signal signal peptide spans Met-1–Ala-31. Residue Ser-176 participates in Mo-bis(molybdopterin guanine dinucleotide) binding.

It belongs to the prokaryotic molybdopterin-containing oxidoreductase family. The cofactor is Mo-bis(molybdopterin guanine dinucleotide). Predicted to be exported by the Tat system. The position of the signal peptide cleavage has not been experimentally proven.

It localises to the periplasm. It carries out the reaction trimethylamine + 2 Fe(III)-[cytochrome c] + H2O = trimethylamine N-oxide + 2 Fe(II)-[cytochrome c] + 3 H(+). In terms of biological role, reduces trimethylamine-N-oxide (TMAO) into trimethylamine; an anaerobic reaction coupled to energy-yielding reactions. Can also reduce other N- and S-oxide compounds such as 4-methylmorpholine-N-oxide and biotin sulfoxide (BSO), but with a lower catalytic efficiency. The protein is Trimethylamine-N-oxide reductase 2 (torZ) of Escherichia coli O157:H7.